Reading from the N-terminus, the 456-residue chain is Phosphomannomutase (456 aa).

The active-site Phosphoserine intermediate is Ser-98. Residues Ser-98, Asp-245, Asp-247, and Asp-249 each contribute to the Mg(2+) site.

It belongs to the phosphohexose mutase family. Mg(2+) serves as cofactor.

It carries out the reaction alpha-D-mannose 1-phosphate = D-mannose 6-phosphate. The protein operates within nucleotide-sugar biosynthesis; GDP-alpha-D-mannose biosynthesis; alpha-D-mannose 1-phosphate from D-fructose 6-phosphate: step 2/2. Functionally, involved in the biosynthesis of the capsular polysaccharide colanic acid. This is Phosphomannomutase (manB) from Escherichia coli (strain K12).